The chain runs to 766 residues: Ribonuclease Z, mitochondrial (766 aa).

The N-terminal 25 residues, M1 to A25, are a transit peptide targeting the mitochondrion.

It belongs to the RNase Z family. In terms of assembly, homodimer. The cofactor is Zn(2+).

It is found in the nucleus. The protein resides in the mitochondrion. The catalysed reaction is Endonucleolytic cleavage of RNA, removing extra 3' nucleotides from tRNA precursor, generating 3' termini of tRNAs. A 3'-hydroxy group is left at the tRNA terminus and a 5'-phosphoryl group is left at the trailer molecule.. Its function is as follows. Zinc phosphodiesterase, which displays some tRNA 3'-processing endonuclease activity of nuclear and mitochondrial pre-tRNA. Probably involved in tRNA maturation, by removing a 3'-trailer from precursor tRNA. May participate in tRNA processing in the developing embryo. In Drosophila melanogaster (Fruit fly), this protein is Ribonuclease Z, mitochondrial.